We begin with the raw amino-acid sequence, 69 residues long: MKEGIHPDYSEAVVKCACGETFTTGSTKKSLHVEICSKCHPFYTGRQKLVDTGGRVDKFKKKYGIVDNE.

Cys16, Cys18, Cys36, and Cys39 together coordinate Zn(2+).

It belongs to the bacterial ribosomal protein bL31 family. Type A subfamily. As to quaternary structure, part of the 50S ribosomal subunit. It depends on Zn(2+) as a cofactor.

In terms of biological role, binds the 23S rRNA. This Ruminiclostridium cellulolyticum (strain ATCC 35319 / DSM 5812 / JCM 6584 / H10) (Clostridium cellulolyticum) protein is Large ribosomal subunit protein bL31.